A 557-amino-acid chain; its full sequence is Dicarboxylate transporter 1, chloroplastic (557 aa).

The N-terminal 69 residues, 1–69 (MASLALSGSC…STLVKASSTV (69 aa)), are a transit peptide targeting the chloroplast. The next 12 helical transmembrane spans lie at 90 to 110 (AAIKPLLASIATGLILWFVPV), 122 to 142 (LAIFLATIVGIITQPLPLGAV), 158 to 178 (FAAAFSAFGDPIPWLIALAFF), 229 to 249 (AGGIFLPLVKSLCVACGSNVG), 256 to 276 (LGSWLMLTCFQTSVISSSMFL), 305 to 325 (AAIVPGLVSLIVVPFLLYLIY), 355 to 375 (IMAATLFLTVGLWIFGAKLGV), 376 to 396 (DAVTAAILGLSVLLVTGVVTW), 411 to 431 (WFAALIAMAGYLNKYGLIEWF), 438 to 458 (FVGGLGLSWQLSFGILVLLYF), 477 to 497 (AFLSVSTALGTPPYFAALVLA), and 531 to 551 (YGFLISIVNILIWLGVGGAWW).

It belongs to the SLC13A/DASS transporter (TC 2.A.47) family. DIT1 subfamily. In terms of tissue distribution, expressed in roots, rosette and cauline leaves, stems, flowers and siliques.

The protein localises to the plastid. The protein resides in the chloroplast inner membrane. Functionally, 2-oxoglutarate/malate translocator involved with DIT2-1 in primary ammonia assimilation and in the re-assimilation of ammonia generated by the photorespiratory pathway. Imports 2-oxoglutarate into plastids as precursor for ammonia assimilation. 2-oxoglutarate is converted to glutamate, the end product of ammonia assimilation, which is exported to the cytosol by DIT2-1. The sequence is that of Dicarboxylate transporter 1, chloroplastic (DIT1) from Arabidopsis thaliana (Mouse-ear cress).